Consider the following 440-residue polypeptide: Thymidine phosphorylase (440 aa).

It belongs to the thymidine/pyrimidine-nucleoside phosphorylase family. In terms of assembly, homodimer.

The enzyme catalyses thymidine + phosphate = 2-deoxy-alpha-D-ribose 1-phosphate + thymine. The protein operates within pyrimidine metabolism; dTMP biosynthesis via salvage pathway; dTMP from thymine: step 1/2. Its function is as follows. The enzymes which catalyze the reversible phosphorolysis of pyrimidine nucleosides are involved in the degradation of these compounds and in their utilization as carbon and energy sources, or in the rescue of pyrimidine bases for nucleotide synthesis. The polypeptide is Thymidine phosphorylase (Escherichia coli (strain K12 / DH10B)).